The chain runs to 199 residues: MTHNPNIIWHPAAISKSDRQSLNGHKSCVLWFTGLSGSGKSVLANAVDEKLYRKGIQSYVLDGDNIRHGLNKDLGFQTGDRIENIRRIGEVAKLFVDSGQMILTAFISPFREDRDMVRALFPKGEFFEIYVKCPLHVCEQRDPKGLYKKARNGEIKHFTGIDSPYEAPLSPDFIIESDQTSISDGADLIINALQNRGII.

34–41 (GLSGSGKS) contacts ATP. Catalysis depends on Ser108, which acts as the Phosphoserine intermediate.

It belongs to the APS kinase family.

The enzyme catalyses adenosine 5'-phosphosulfate + ATP = 3'-phosphoadenylyl sulfate + ADP + H(+). It functions in the pathway sulfur metabolism; hydrogen sulfide biosynthesis; sulfite from sulfate: step 2/3. In terms of biological role, catalyzes the synthesis of activated sulfate. This Bacillus subtilis (strain 168) protein is Probable adenylyl-sulfate kinase (yisZ).